Reading from the N-terminus, the 105-residue chain is Large ribosomal subunit protein uL24 (105 aa).

This sequence belongs to the universal ribosomal protein uL24 family. Part of the 50S ribosomal subunit.

Its function is as follows. One of two assembly initiator proteins, it binds directly to the 5'-end of the 23S rRNA, where it nucleates assembly of the 50S subunit. In terms of biological role, one of the proteins that surrounds the polypeptide exit tunnel on the outside of the subunit. This Francisella tularensis subsp. novicida (strain U112) protein is Large ribosomal subunit protein uL24.